Consider the following 85-residue polypeptide: Large ribosomal subunit protein bL27 (85 aa).

The span at 1-10 shows a compositional bias: gly residues; it reads MAQKKGGGST. Positions 1 to 20 are disordered; sequence MAQKKGGGSTRNGRDSKPKM.

It belongs to the bacterial ribosomal protein bL27 family.

This is Large ribosomal subunit protein bL27 from Acidovorax ebreus (strain TPSY) (Diaphorobacter sp. (strain TPSY)).